Here is a 264-residue protein sequence, read N- to C-terminus: Leukocyte receptor cluster member 1 (264 aa).

2 disordered regions span residues 1-37 (MNIL…RERR) and 49-76 (FLRK…SGPV). Over residues 12-37 (RNKDNVARVRRDEAQAREEEKERERR) the composition is skewed to basic and acidic residues. The stretch at 16-46 (NVARVRRDEAQAREEEKERERRVLLAQQEAR) forms a coiled coil. Ser-59 carries the phosphoserine modification. Over residues 59 to 75 (SLPELEAAEAGAPGSGP) the composition is skewed to low complexity. The stretch at 89–115 (VIRGNKEYKEEKRQEKERQEKALGILT) forms a coiled coil. The interval 118-264 (GQSAAEAQTQ…PRQQDPHLTH (147 aa)) is disordered. Composition is skewed to basic and acidic residues over residues 146–162 (PDEK…EMQK) and 170–214 (HGGD…RSRA). A coiled-coil region spans residues 196 to 222 (LDQLRAERLRREAAERSRAEALLARVQ). Phosphoserine is present on Ser-245.

The polypeptide is Leukocyte receptor cluster member 1 (LENG1) (Homo sapiens (Human)).